Reading from the N-terminus, the 653-residue chain is Extracellular metalloproteinase (653 aa).

The first 19 residues, 1–19 (MRSFLLASLASLSVISVYG), serve as a signal peptide directing secretion. A propeptide spanning residues 20-244 (HPHARSTLTR…VHAVVDYSAD (225 aa)) is cleaved from the precursor. Residues asparagine 327, asparagine 336, and asparagine 412 are each glycosylated (N-linked (GlcNAc...) asparagine). Residue histidine 429 participates in Zn(2+) binding. Residue glutamate 430 is part of the active site. Histidine 433 is a Zn(2+) binding site. N-linked (GlcNAc...) asparagine glycans are attached at residues asparagine 636 and asparagine 637.

The protein belongs to the peptidase M36 family. Requires Zn(2+) as cofactor.

It is found in the secreted. Its function is as follows. Secreted metalloproteinase that allows assimilation of proteinaceous substrates. This chain is Extracellular metalloproteinase (MEP), found in Pyrenophora tritici-repentis (strain Pt-1C-BFP) (Wheat tan spot fungus).